We begin with the raw amino-acid sequence, 356 residues long: PEP-dependent dihydroxyacetone kinase, dihydroxyacetone-binding subunit DhaK (356 aa).

A DhaK domain is found at 7–352; it reads DVQDVLDEQL…WDAPVHTPAL (346 aa). Dihydroxyacetone is bound by residues 53–56, Lys104, and Asp109; that span reads GSGH. His56 functions as the Proton acceptor in the catalytic mechanism. Catalysis depends on His218, which acts as the Tele-hemiaminal-histidine intermediate.

In terms of assembly, homodimer. The dihydroxyacetone kinase complex is composed of a homodimer of DhaM, a homodimer of DhaK and the subunit DhaL. DhaL also forms a complex with DhaR.

It catalyses the reaction dihydroxyacetone + phosphoenolpyruvate = dihydroxyacetone phosphate + pyruvate. Its pathway is polyol metabolism; glycerol degradation. Inhibited by chloro-3-hydroxyacetone and D,L-glyceraldehyde. Functionally, dihydroxyacetone binding subunit of the dihydroxyacetone kinase, which is responsible for the phosphoenolpyruvate (PEP)-dependent phosphorylation of dihydroxyacetone via a phosphoryl group transfer from DhaL-ATP. Binds covalently dihydroxyacetone in hemiaminal linkage. DhaK also acts as corepressor of the transcription activator DhaR by binding to the sensor domain of DhaR. In the presence of dihydroxyacetone, DhaL-ADP displaces DhaK and stimulates DhaR activity. In the absence of dihydroxyacetone, DhaL-ADP is converted by the PTS to DhaL-ATP, which does not bind to DhaR. This chain is PEP-dependent dihydroxyacetone kinase, dihydroxyacetone-binding subunit DhaK, found in Escherichia coli (strain K12).